Consider the following 237-residue polypeptide: Large ribosomal subunit protein uL3 (237 aa).

Disordered regions lie at residues 133–155 (ASHG…DPGK) and 213–237 (PENA…EGGE). Polar residues predominate over residues 135–150 (HGNSITHRSHGSTGQR). N5-methylglutamine is present on glutamine 151. Residues 220–237 (AGLRAGAKAEAAATEGGE) show a composition bias toward low complexity.

It belongs to the universal ribosomal protein uL3 family. In terms of assembly, part of the 50S ribosomal subunit. Forms a cluster with proteins L14 and L19. Post-translationally, methylated by PrmB.

One of the primary rRNA binding proteins, it binds directly near the 3'-end of the 23S rRNA, where it nucleates assembly of the 50S subunit. This chain is Large ribosomal subunit protein uL3, found in Brucella abortus (strain S19).